A 181-amino-acid polypeptide reads, in one-letter code: MKASISIDEKKDFIRWFLNKHQMKTREAMWVLNYIAGHDQIVKYVHFVDNLEGCARGLSLSAHGVESEPFLFFKGNIMTTDPEKAFHDIRLNWDEELYVELHFEEAITSPEYALVREDNPFTAVKLADEEKEMADALIYQSVHQFSREKVLQQIDEALDARDEVTFHKLVRILQQMDTVKE.

Belongs to the UPF0302 family.

The chain is UPF0302 protein LMHCC_0635 from Listeria monocytogenes serotype 4a (strain HCC23).